A 290-amino-acid chain; its full sequence is METVVDKDVLKSSGAELLPDGRRGLRIHDWEIETLRGTILTSLAVEEWEKKLKTSHLPEMVFGENALVLKHLGSNTKIHFNAFDALAGWKQEGLPPVEVPAAAQWKFRSKPSQQVILDYDYTFTTPYCGSEVVEKDKETVEAKANPKGEATLQWENCEDQIDLAALSLKEPILFYDEVVLYEDELADNGVSLLTVKVRVMPSSWFLLLRFWLRVDGVLMRLRETRMHYRFGEDEAPTVLRENCWREATFQSLSAKGYPVDLAVWSDPSSISQRLPVIKHTTQKLKIPSKV.

Belongs to the TIP41 family. Interacts with TAP46. Widely expressed.

May be involved in the regulation of the TOR signaling pathway. Indirectly activates the PP2A phosphatase via interaction with its suppressor TAP46. Could play a role in cytoskeleton functions. In Arabidopsis thaliana (Mouse-ear cress), this protein is TIP41-like protein.